A 282-amino-acid polypeptide reads, in one-letter code: 2-dehydro-3-deoxyphosphooctonate aldolase (282 aa).

This sequence belongs to the KdsA family.

Its subcellular location is the cytoplasm. The enzyme catalyses D-arabinose 5-phosphate + phosphoenolpyruvate + H2O = 3-deoxy-alpha-D-manno-2-octulosonate-8-phosphate + phosphate. It participates in carbohydrate biosynthesis; 3-deoxy-D-manno-octulosonate biosynthesis; 3-deoxy-D-manno-octulosonate from D-ribulose 5-phosphate: step 2/3. Its pathway is bacterial outer membrane biogenesis; lipopolysaccharide biosynthesis. The sequence is that of 2-dehydro-3-deoxyphosphooctonate aldolase from Shewanella baltica (strain OS223).